The chain runs to 142 residues: Large ribosomal subunit protein uL11 (142 aa).

Belongs to the universal ribosomal protein uL11 family. Part of the ribosomal stalk of the 50S ribosomal subunit. Interacts with L10 and the large rRNA to form the base of the stalk. L10 forms an elongated spine to which L12 dimers bind in a sequential fashion forming a multimeric L10(L12)X complex. One or more lysine residues are methylated.

Its function is as follows. Forms part of the ribosomal stalk which helps the ribosome interact with GTP-bound translation factors. The protein is Large ribosomal subunit protein uL11 of Gamma-proteobacterium EBAC31A08.